The chain runs to 89 residues: UPF0213 protein LMOf2365_0181 (89 aa).

The region spanning 5–80 (SEHFFYVLKC…KKLSRKNKDA (76 aa)) is the GIY-YIG domain.

This sequence belongs to the UPF0213 family.

The sequence is that of UPF0213 protein LMOf2365_0181 from Listeria monocytogenes serotype 4b (strain F2365).